A 169-amino-acid chain; its full sequence is E1B protein, small T-antigen (169 aa).

Belongs to the adenoviridae E1B 19 kDa protein family.

This Canis lupus familiaris (Dog) protein is E1B protein, small T-antigen.